We begin with the raw amino-acid sequence, 54 residues long: Large ribosomal subunit protein bL33 (54 aa).

This sequence belongs to the bacterial ribosomal protein bL33 family.

The sequence is that of Large ribosomal subunit protein bL33 from Corynebacterium glutamicum (strain R).